The sequence spans 267 residues: MNQATALMAPSDARLKFRNGLVTPTSGWSDGYTQANLIAVAADYADEFIEFCRLNPKACPVIDIIPAGRHESVLAAGSDIRSDVPAYRIWVDGELADEVTDATSVWRDDMVGVLIGCSFTFEAALASEGIPLRHTETGRNVPMYRTNIECTPAGRIHGPMVVSMRPMLPGLVDTAIRVTSEVPKVHGSPVHVGSPEDLGIADINRPDFGDAVEIRPGEVPVFWACGVTPQSAVMASRPSFAISHAPGHMFITDVPESNYREPAGVSL.

Belongs to the D-glutamate cyclase family.

The chain is Putative hydro-lyase Arth_3576 from Arthrobacter sp. (strain FB24).